The primary structure comprises 184 residues: Der GTPase-activating protein YihI (184 aa).

Disordered regions lie at residues 1–106 and 159–184; these read MNRP…PTMS and LGDDDEEEQQEDMLQLLKRNNPKDAL. The span at 8–32 shows a compositional bias: basic and acidic residues; the sequence is VADKAEKSKVKRKTREELEREARER. The span at 159-169 shows a compositional bias: acidic residues; it reads LGDDDEEEQQE.

This sequence belongs to the YihI family. Interacts with Der.

Its function is as follows. A GTPase-activating protein (GAP) that modifies Der/EngA GTPase function. May play a role in ribosome biogenesis. This Pectobacterium atrosepticum (strain SCRI 1043 / ATCC BAA-672) (Erwinia carotovora subsp. atroseptica) protein is Der GTPase-activating protein YihI.